A 762-amino-acid chain; its full sequence is Protein PHTF1 (762 aa).

The region spanning 6-150 is the PHTF domain; the sequence is RDAISWYQKK…VHCQIVSTQI (145 aa). Transmembrane regions (helical) follow at residues 77-97, 99-119, and 121-141; these read GLVR…VTSL, IFVW…LYLM, and PIVS…MGTV. The interval 152–184 is disordered; the sequence is RPSGNNGNRRRRKLRKTVNGDGTRDNGNNSPDK. Residues asparagine 179 and asparagine 224 are each glycosylated (N-linked (GlcNAc...) asparagine). Residues serine 272, serine 276, serine 277, serine 334, and serine 336 each carry the phosphoserine modification. The disordered stretch occupies residues 345-415; sequence AAFSQGSRSG…NTLHSGTKRD (71 aa). Residues 348–364 are compositionally biased toward low complexity; the sequence is SQGSRSGMSGGSRSLNL. A glycan (N-linked (GlcNAc...) asparagine) is linked at asparagine 363. A compositionally biased stretch (basic and acidic residues) spans 365 to 376; that stretch reads SRRDSESTRHDS. N-linked (GlcNAc...) asparagine glycosylation occurs at asparagine 431. 4 consecutive transmembrane segments (helical) span residues 473–493, 515–535, 611–631, and 645–665; these read GVGY…FPFL, TLFC…INFF, VVVS…CAQV, and WEFL…ASLG. N-linked (GlcNAc...) asparagine glycosylation is found at asparagine 674 and asparagine 733. Residues 737-757 traverse the membrane as a helical segment; the sequence is VVILSAVSGVISDLLGFNIRL.

As to quaternary structure, interacts with FEM1B. As to expression, highly expressed in testis.

It localises to the endoplasmic reticulum membrane. It is found in the golgi apparatus. The protein resides in the cis-Golgi network membrane. In Rattus norvegicus (Rat), this protein is Protein PHTF1.